We begin with the raw amino-acid sequence, 432 residues long: Succinate--CoA ligase [GDP-forming] subunit beta, mitochondrial (432 aa).

The N-terminal 37 residues, 1–37, are a transit peptide targeting the mitochondrion; that stretch reads MASPVAAQAGKLLRALALRPRFLAAGSQAVQLTSRRW. Residues 46-274 form the ATP-grasp domain; that stretch reads KKLMSDNGVR…NAEFRQKDIF (229 aa). Q57 lines the GTP pocket. The residue at position 73 (K73) is an N6-acetyllysine. K78 is subject to N6-succinyllysine. 90 to 92 is a GTP binding site; that stretch reads GRG. K132 and K139 each carry N6-acetyllysine. L146 provides a ligand contact to GTP. Residue S161 is modified to Phosphoserine. K200, K218, and K227 each carry N6-acetyllysine. Mg(2+)-binding residues include N243 and D257. Residues K271 and K291 each carry the N6-acetyllysine modification. Residue N308 coordinates substrate. K338 is subject to N6-succinyllysine. K347 bears the N6-acetyllysine mark. 365-367 serves as a coordination point for substrate; it reads GIV. 2 positions are modified to N6-acetyllysine: K386 and K423.

Belongs to the succinate/malate CoA ligase beta subunit family. GTP-specific subunit beta subfamily. As to quaternary structure, heterodimer of an alpha and a beta subunit. The beta subunit determines specificity for GTP. The cofactor is Mg(2+). As to expression, mainly expressed in liver, kidney, heart, spleen and skeletal muscle. Also found in intestine and colon, and in low amounts in lung, brain, prostate, testis and ovary.

The protein localises to the mitochondrion. It catalyses the reaction GTP + succinate + CoA = succinyl-CoA + GDP + phosphate. Its pathway is carbohydrate metabolism; tricarboxylic acid cycle; succinate from succinyl-CoA (ligase route): step 1/1. Its function is as follows. GTP-specific succinyl-CoA synthetase functions in the citric acid cycle (TCA), coupling the hydrolysis of succinyl-CoA to the synthesis of GTP and thus represents the only step of substrate-level phosphorylation in the TCA. The beta subunit provides nucleotide specificity of the enzyme and binds the substrate succinate, while the binding sites for coenzyme A and phosphate are found in the alpha subunit. This is Succinate--CoA ligase [GDP-forming] subunit beta, mitochondrial from Homo sapiens (Human).